Consider the following 502-residue polypeptide: Probable glycine dehydrogenase (decarboxylating) subunit 2 (502 aa).

Lys273 is subject to N6-(pyridoxal phosphate)lysine.

This sequence belongs to the GcvP family. C-terminal subunit subfamily. The glycine cleavage system is composed of four proteins: P, T, L and H. In this organism, the P 'protein' is a heterodimer of two subunits. It depends on pyridoxal 5'-phosphate as a cofactor.

It catalyses the reaction N(6)-[(R)-lipoyl]-L-lysyl-[glycine-cleavage complex H protein] + glycine + H(+) = N(6)-[(R)-S(8)-aminomethyldihydrolipoyl]-L-lysyl-[glycine-cleavage complex H protein] + CO2. Its function is as follows. The glycine cleavage system catalyzes the degradation of glycine. The P protein binds the alpha-amino group of glycine through its pyridoxal phosphate cofactor; CO(2) is released and the remaining methylamine moiety is then transferred to the lipoamide cofactor of the H protein. This Pyrococcus abyssi (strain GE5 / Orsay) protein is Probable glycine dehydrogenase (decarboxylating) subunit 2.